A 151-amino-acid chain; its full sequence is Nucleoside diphosphate kinase (151 aa).

6 residues coordinate ATP: Lys-9, Phe-57, Arg-86, Thr-92, Arg-103, and Asn-113. Catalysis depends on His-116, which acts as the Pros-phosphohistidine intermediate.

The protein belongs to the NDK family. In terms of assembly, homotetramer. Requires Mg(2+) as cofactor.

It localises to the cytoplasm. It carries out the reaction a 2'-deoxyribonucleoside 5'-diphosphate + ATP = a 2'-deoxyribonucleoside 5'-triphosphate + ADP. The catalysed reaction is a ribonucleoside 5'-diphosphate + ATP = a ribonucleoside 5'-triphosphate + ADP. In terms of biological role, major role in the synthesis of nucleoside triphosphates other than ATP. The ATP gamma phosphate is transferred to the NDP beta phosphate via a ping-pong mechanism, using a phosphorylated active-site intermediate. This is Nucleoside diphosphate kinase from Chloroflexus aurantiacus (strain ATCC 29364 / DSM 637 / Y-400-fl).